The chain runs to 208 residues: Small ribosomal subunit protein uS4 (208 aa).

The 64-residue stretch at 98 to 161 (RRLDNVIYRL…KESPRIKELL (64 aa)) folds into the S4 RNA-binding domain.

It belongs to the universal ribosomal protein uS4 family. As to quaternary structure, part of the 30S ribosomal subunit. Contacts protein S5. The interaction surface between S4 and S5 is involved in control of translational fidelity.

In terms of biological role, one of the primary rRNA binding proteins, it binds directly to 16S rRNA where it nucleates assembly of the body of the 30S subunit. Its function is as follows. With S5 and S12 plays an important role in translational accuracy. This Pelotomaculum thermopropionicum (strain DSM 13744 / JCM 10971 / SI) protein is Small ribosomal subunit protein uS4.